The chain runs to 185 residues: Ribosome-recycling factor (185 aa).

It belongs to the RRF family.

It localises to the cytoplasm. Functionally, responsible for the release of ribosomes from messenger RNA at the termination of protein biosynthesis. May increase the efficiency of translation by recycling ribosomes from one round of translation to another. The sequence is that of Ribosome-recycling factor from Ehrlichia ruminantium (strain Welgevonden).